Here is a 137-residue protein sequence, read N- to C-terminus: Maltose regulon regulatory protein MalI (137 aa).

Positions 6–60 constitute an HTH lacI-type domain; that stretch reads VTITEVAKHAGVSVTTVSMVLGNKGRISPDTIEKVNASVEALGYIRNRAAANLRS. Residues 8 to 27 constitute a DNA-binding region (H-T-H motif); sequence ITEVAKHAGVSVTTVSMVLG.

In terms of biological role, repressor for the malX and malY genes. The sequence is that of Maltose regulon regulatory protein MalI (malI) from Vibrio furnissii.